The primary structure comprises 515 residues: Histone-lysine N-methyltransferase SET5 (515 aa).

The SET domain occupies 114–386; it reads SKVEIRECEE…KDEELVTTYV (273 aa). The span at 452–462 shows a compositional bias: polar residues; sequence ALQRSNGGSSS. The disordered stretch occupies residues 452 to 476; sequence ALQRSNGGSSSDLRRKSSIRNRKPD.

It belongs to the class V-like SAM-binding methyltransferase superfamily. Histone-lysine methyltransferase family. SET5 subfamily.

The protein resides in the nucleus. It is found in the chromosome. It localises to the cytoplasm. It catalyses the reaction L-lysyl-[histone] + S-adenosyl-L-methionine = N(6)-methyl-L-lysyl-[histone] + S-adenosyl-L-homocysteine + H(+). In terms of biological role, histone methyltransferase that monomethylates 'Lys-5', 'Lys-8' and 'Lys-12' of histone H4 (H4K5me1, H4K8me1 and H4K12me1, respectively), thereby controlling gene expression and remodeling chromatin structures. The sequence is that of Histone-lysine N-methyltransferase SET5 (SET5) from Candida glabrata (strain ATCC 2001 / BCRC 20586 / JCM 3761 / NBRC 0622 / NRRL Y-65 / CBS 138) (Yeast).